We begin with the raw amino-acid sequence, 1052 residues long: Membrane-bound transcription factor site-1 protease (1052 aa).

The signal sequence occupies residues 1–17 (MKLVSTWLLVLVVLLCG). Positions 18-186 (KRHLGDRLGT…TGRHSSRRLL (169 aa)) are excised as a propeptide. An N-linked (GlcNAc...) asparagine glycan is attached at N148. Position 168 is a phosphoserine (S168). At 187-999 (RAIPRQVAQT…MPGRYNQEVG (813 aa)) the chain is on the lumenal side. Residues 190 to 472 (PRQVAQTLQA…HGKLDLLRAY (283 aa)) form the Peptidase S8 domain. Residue D218 is the Charge relay system of the active site. An N-linked (GlcNAc...) asparagine glycan is attached at N236. H249 acts as the Charge relay system in catalysis. A glycan (N-linked (GlcNAc...) asparagine) is linked at N305. Catalysis depends on S414, which acts as the Charge relay system. 2 N-linked (GlcNAc...) asparagine glycosylation sites follow: N515 and N728. Over residues 877–887 (PSLSHSGNRQR) the composition is skewed to polar residues. The interval 877–900 (PSLSHSGNRQRPPSGAGLAPPERM) is disordered. An N-linked (GlcNAc...) asparagine glycan is attached at N939. The chain crosses the membrane as a helical span at residues 1000 to 1022 (QTIPVFAFLGAMVALAFFVVQIS). The Cytoplasmic segment spans residues 1023 to 1052 (KAKSRPKRRRPRAKRPQLAQQAHPARTPSV). Residues 1026-1037 (SRPKRRRPRAKR) show a composition bias toward basic residues. The disordered stretch occupies residues 1026–1052 (SRPKRRRPRAKRPQLAQQAHPARTPSV).

Belongs to the peptidase S8 family. In terms of assembly, interacts with LYSET; this interaction bridges GNPTAB to MBTPS1. The cofactor is Ca(2+). Post-translationally, the 148 kDa zymogen is processed progressively into two membrane-bound 120 and 106 kDa forms in the endoplasmic reticulum, and late into a secreted 98 kDa form. The propeptide is autocatalytically removed through an intramolecular cleavage after Leu-186. Further cleavage generates 14, 10, and 8 kDa intermediates.

It is found in the endoplasmic reticulum membrane. It localises to the golgi apparatus membrane. It carries out the reaction Processes precursors containing basic and hydrophobic/aliphatic residues at P4 and P2, respectively, with a relatively relaxed acceptance of amino acids at P1 and P3.. With respect to regulation, inhibited by divalent copper and zinc ions, but not by nickel or cobalt. Inhibited by its prosegment, but not smaller fragments. Inhibited by 4-(2-aminoethyl)benzenesulfonyl fluoride (AEBSF), a serine protease inhibitor. Functionally, serine protease that cleaves after hydrophobic or small residues, provided that Arg or Lys is in position P4: known substrates include SREBF1/SREBP1, SREBF2/SREBP2, BDNF, GNPTAB, ATF6, ATF6B and FAM20C. Cleaves substrates after Arg-Ser-Val-Leu (SREBP2), Arg-His-Leu-Leu (ATF6), Arg-Gly-Leu-Thr (BDNF) and its own propeptide after Arg-Arg-Leu-Leu. Catalyzes the first step regulated intramembrane proteolysis activation of the sterol regulatory element-binding proteins (SREBPs) SREBF1/SREBP1 and SREBF2/SREBP2. Also mediates the first step of the regulated intramembrane proteolytic activation of the cyclic AMP-dependent transcription factor ATF-6 (ATF6 and ATF6B). Mediates the protein cleavage of GNPTAB into subunit alpha and beta, thereby participating in biogenesis of lysosomes. Cleaves the propeptide from FAM20C which is required for FAM20C secretion from the Golgi apparatus membrane and for enhancement of FAM20C kinase activity, promoting osteoblast differentiation and biomineralization. Involved in the regulation of M6P-dependent Golgi-to-lysosome trafficking of lysosomal enzymes. It is required for the activation of CREB3L2/BBF2H7, a transcriptional activator of MIA3/TANGO and other genes controlling mega vesicle formation. Therefore, it plays a key role in the regulation of mega vesicle-mediated collagen trafficking. In astrocytes and osteoblasts, upon DNA damage and ER stress, mediates the first step of the regulated intramembrane proteolytic activation of the transcription factor CREB3L1, leading to the inhibition of cell-cycle progression. The chain is Membrane-bound transcription factor site-1 protease (Mbtps1) from Mus musculus (Mouse).